The following is a 237-amino-acid chain: Ribose-5-phosphate isomerase A (237 aa).

Residues Thr32–Thr35, Asp85–Asp88, and Lys99–Gly102 contribute to the substrate site. Glu108 functions as the Proton acceptor in the catalytic mechanism. Arg126 lines the substrate pocket.

This sequence belongs to the ribose 5-phosphate isomerase family. In terms of assembly, homodimer.

The enzyme catalyses aldehydo-D-ribose 5-phosphate = D-ribulose 5-phosphate. It participates in carbohydrate degradation; pentose phosphate pathway; D-ribose 5-phosphate from D-ribulose 5-phosphate (non-oxidative stage): step 1/1. Its function is as follows. Catalyzes the reversible conversion of ribose-5-phosphate to ribulose 5-phosphate. The protein is Ribose-5-phosphate isomerase A of Aeropyrum pernix (strain ATCC 700893 / DSM 11879 / JCM 9820 / NBRC 100138 / K1).